The primary structure comprises 172 residues: C-phycocyanin beta chain (172 aa).

Residues asparagine 35, aspartate 39, asparagine 72, arginine 77, cysteine 82, 82-88 (CLRDMEI), 149-151 (TIG), and cysteine 153 contribute to the (2R,3E)-phycocyanobilin site. Asparagine 72 is subject to N4-methylasparagine.

Belongs to the phycobiliprotein family. Heterodimer of an alpha and a beta subunit, which further assembles into trimers and the trimers into hexamers. The basic functional unit of phycobiliproteins is a ring-shaped hexamer formed from two back-to-back trimers contacting via the alpha chain subunits. The trimers are composed of alpha/beta subunit heterodimers arranged around a three-fold axis of symmetry. The phycoerythrins also contain a gamma subunit which is located in the center of the hexamer. Contains two covalently linked phycocyanobilin chromophores.

The protein resides in the plastid. Its subcellular location is the chloroplast thylakoid membrane. In terms of biological role, light-harvesting photosynthetic tetrapyrrole chromophore-protein from the phycobiliprotein complex (phycobilisome, PBS). Phycocyanin is the major phycobiliprotein in the PBS rod. This is C-phycocyanin beta chain (cpcB) from Cyanidium caldarium (Red alga).